We begin with the raw amino-acid sequence, 356 residues long: Phenylalanine--tRNA ligase alpha subunit (356 aa).

Glutamate 260 lines the Mg(2+) pocket.

The protein belongs to the class-II aminoacyl-tRNA synthetase family. Phe-tRNA synthetase alpha subunit type 1 subfamily. In terms of assembly, tetramer of two alpha and two beta subunits. Requires Mg(2+) as cofactor.

It is found in the cytoplasm. The catalysed reaction is tRNA(Phe) + L-phenylalanine + ATP = L-phenylalanyl-tRNA(Phe) + AMP + diphosphate + H(+). The sequence is that of Phenylalanine--tRNA ligase alpha subunit from Gluconobacter oxydans (strain 621H) (Gluconobacter suboxydans).